We begin with the raw amino-acid sequence, 173 residues long: Putative phosphoesterase GWCH70_0799 (173 aa).

His-34 serves as the catalytic Proton donor. 2 short sequence motifs (HXTX) span residues 34–37 and 115–118; these read HLTL and HITI. The active-site Proton acceptor is the His-115.

This sequence belongs to the 2H phosphoesterase superfamily. YjcG family.

This Geobacillus sp. (strain WCH70) protein is Putative phosphoesterase GWCH70_0799.